The following is a 390-amino-acid chain: Chorismate synthase (390 aa).

2 residues coordinate NADP(+): R48 and R54. FMN is bound by residues 132–134 (RSS), 244–245 (NA), G289, 304–308 (KPTSS), and R330. Positions 362–390 (VGAHPAGAHPAGADPAGTHPGGPGGFQPG) are disordered. A compositionally biased stretch (low complexity) spans 363–379 (GAHPAGAHPAGADPAGT). The segment covering 380–390 (HPGGPGGFQPG) has biased composition (gly residues).

It belongs to the chorismate synthase family. As to quaternary structure, homotetramer. The cofactor is FMNH2.

The catalysed reaction is 5-O-(1-carboxyvinyl)-3-phosphoshikimate = chorismate + phosphate. It participates in metabolic intermediate biosynthesis; chorismate biosynthesis; chorismate from D-erythrose 4-phosphate and phosphoenolpyruvate: step 7/7. Catalyzes the anti-1,4-elimination of the C-3 phosphate and the C-6 proR hydrogen from 5-enolpyruvylshikimate-3-phosphate (EPSP) to yield chorismate, which is the branch point compound that serves as the starting substrate for the three terminal pathways of aromatic amino acid biosynthesis. This reaction introduces a second double bond into the aromatic ring system. This Methylobacterium sp. (strain 4-46) protein is Chorismate synthase.